The following is a 62-amino-acid chain: uncharacterized protein (62 aa).

The first 22 residues, 1-22, serve as a signal peptide directing secretion; the sequence is MVNVALLLDQIIATPLRSMVEA.

This is an uncharacterized protein from Archaeoglobus fulgidus (strain ATCC 49558 / DSM 4304 / JCM 9628 / NBRC 100126 / VC-16).